The sequence spans 355 residues: Ion-translocating oxidoreductase complex subunit D (355 aa).

4 helical membrane passes run 23–43 (WVAL…GWGT), 44–64 (LVQL…VMLF), 78–109 (ALVT…IVIA), and 129–149 (VVLL…LPLI). Threonine 194 is modified (FMN phosphoryl threonine). 5 helical membrane passes run 221–241 (FAGV…LILL), 250–270 (IPVG…LFFP), 273–293 (TASP…FFIA), 307–327 (ILFG…GGFP), and 328–348 (DGVA…DYYT).

Belongs to the NqrB/RnfD family. In terms of assembly, the complex is composed of six subunits: RnfA, RnfB, RnfC, RnfD, RnfE and RnfG. FMN serves as cofactor.

It is found in the cell inner membrane. Part of a membrane-bound complex that couples electron transfer with translocation of ions across the membrane. In Vibrio vulnificus (strain CMCP6), this protein is Ion-translocating oxidoreductase complex subunit D.